The primary structure comprises 590 residues: Muscarinic acetylcholine receptor M3 (590 aa).

Over 1-67 (MTLHNNNTTS…DPLGGHTIWQ (67 aa)) the chain is Extracellular. N-linked (GlcNAc...) asparagine glycans are attached at residues Asn-6, Asn-7, Asn-15, Asn-41, Asn-48, and Asn-53. A helical membrane pass occupies residues 68-91 (VVFIAFLTGVLALVTIIGNILVIV). The Cytoplasmic portion of the chain corresponds to 92–104 (AFKVNKQLKTVNN). A helical transmembrane segment spans residues 105–125 (YFLLSLACADLIIGVISMNLF). Over 126–142 (TTYIIMNRWALGNLACD) the chain is Extracellular. An intrachain disulfide couples Cys-141 to Cys-221. Residues 143-164 (LWLSIDYVASNASVMNLLVISF) traverse the membrane as a helical segment. At 165–184 (DRYFSITRPLTYRAKRTTKR) the chain is on the cytoplasmic side. Residues 185-207 (AGVMIGLAWVISFILWAPAILFW) form a helical membrane-spanning segment. At 208-229 (QYFVGKRTVPPGECFIQFLSEP) the chain is on the extracellular side. Residues 230 to 252 (TITFGTAIAAFYMPVTIMTILYW) traverse the membrane as a helical segment. Residues 253–492 (RIYKETEKRT…LIKEKKAAQT (240 aa)) are Cytoplasmic-facing. Residues 275–281 (AEAENFV) carry the Basolateral sorting signal motif. Positions 324-357 (AEQMDQDHSSSDSWNNNDAAASLENSASSDEEDI) are disordered. Residues 334–345 (SDSWNNNDAAAS) are compositionally biased toward low complexity. Residue Ser-385 is modified to Phosphoserine. The segment at 398–419 (SVGLERKPSKLQTQQSMDDGGS) is disordered. Residues 407–419 (KLQTQQSMDDGGS) are compositionally biased toward polar residues. A helical transmembrane segment spans residues 493–513 (LSAILLAFIITWTPYNIMVLV). The Extracellular portion of the chain corresponds to 514-527 (NTFCDSCIPKTYWN). A helical transmembrane segment spans residues 528–547 (LGYWLCYINSTVNPVCYALC). Topologically, residues 548–590 (NKTFRNTFKMLLLCQCDKRKRRKQQYQQRQSVIFHKRVPEQAL) are cytoplasmic.

The protein belongs to the G-protein coupled receptor 1 family. Muscarinic acetylcholine receptor subfamily. CHRM3 sub-subfamily. Homodimer; the dimers can form tetramers. Interacts with NALCN. Interacts with TMEM147.

The protein localises to the cell membrane. It is found in the postsynaptic cell membrane. The protein resides in the basolateral cell membrane. It localises to the endoplasmic reticulum membrane. Its function is as follows. The muscarinic acetylcholine receptor mediates various cellular responses, including inhibition of adenylate cyclase, breakdown of phosphoinositides and modulation of potassium channels through the action of G proteins. Primary transducing effect is Pi turnover. This chain is Muscarinic acetylcholine receptor M3 (CHRM3), found in Bos taurus (Bovine).